The primary structure comprises 280 residues: Phosphonates import ATP-binding protein PhnC (280 aa).

The ABC transporter domain maps to 2-245; that stretch reads FELKNVTRRF…AVKEIYGTDK (244 aa). An ATP-binding site is contributed by 34–41; sequence GRSGAGKS. The interval 257–280 is disordered; it reads TSLESKRRAEDVSSGRVAKAAAVH. Positions 260 to 269 are enriched in basic and acidic residues; sequence ESKRRAEDVS.

This sequence belongs to the ABC transporter superfamily. Phosphonates importer (TC 3.A.1.9.1) family. In terms of assembly, the complex is composed of two ATP-binding proteins (PhnC), two transmembrane proteins (PhnE) and a solute-binding protein (PhnD).

It is found in the cell inner membrane. It carries out the reaction phosphonate(out) + ATP + H2O = phosphonate(in) + ADP + phosphate + H(+). Part of the ABC transporter complex PhnCDE involved in phosphonates import. Responsible for energy coupling to the transport system. This is Phosphonates import ATP-binding protein PhnC from Rhizobium johnstonii (strain DSM 114642 / LMG 32736 / 3841) (Rhizobium leguminosarum bv. viciae).